The following is a 485-amino-acid chain: UDP-N-acetylmuramoyl-L-alanyl-D-glutamate--2,6-diaminopimelate ligase (485 aa).

UDP-N-acetyl-alpha-D-muramoyl-L-alanyl-D-glutamate-binding residues include leucine 27 and serine 29. Residue 106–112 (GTSGKTS) participates in ATP binding. UDP-N-acetyl-alpha-D-muramoyl-L-alanyl-D-glutamate-binding positions include 148 to 149 (TT), serine 175, glutamine 181, and arginine 183. The residue at position 215 (lysine 215) is an N6-carboxylysine. Meso-2,6-diaminopimelate is bound by residues arginine 382, 406-409 (DNPR), glycine 454, and glutamate 458. Residues 406–409 (DNPR) carry the Meso-diaminopimelate recognition motif motif.

Belongs to the MurCDEF family. MurE subfamily. Mg(2+) is required as a cofactor. In terms of processing, carboxylation is probably crucial for Mg(2+) binding and, consequently, for the gamma-phosphate positioning of ATP.

The protein resides in the cytoplasm. The enzyme catalyses UDP-N-acetyl-alpha-D-muramoyl-L-alanyl-D-glutamate + meso-2,6-diaminopimelate + ATP = UDP-N-acetyl-alpha-D-muramoyl-L-alanyl-gamma-D-glutamyl-meso-2,6-diaminopimelate + ADP + phosphate + H(+). It functions in the pathway cell wall biogenesis; peptidoglycan biosynthesis. Functionally, catalyzes the addition of meso-diaminopimelic acid to the nucleotide precursor UDP-N-acetylmuramoyl-L-alanyl-D-glutamate (UMAG) in the biosynthesis of bacterial cell-wall peptidoglycan. This Bradyrhizobium diazoefficiens (strain JCM 10833 / BCRC 13528 / IAM 13628 / NBRC 14792 / USDA 110) protein is UDP-N-acetylmuramoyl-L-alanyl-D-glutamate--2,6-diaminopimelate ligase.